The primary structure comprises 133 residues: MTTTETQNPTARATAKHVRVTPMKARRVVDLVRGKRVEDALAILKFAPQAASEPVAKVVASAAANAENNLGLDPATLVISTAYVDEGATLKRFQPRAQGRAFRIRKRTSHITIEVESVPTAGGTRGRRKGGAK.

This sequence belongs to the universal ribosomal protein uL22 family. As to quaternary structure, part of the 50S ribosomal subunit.

In terms of biological role, this protein binds specifically to 23S rRNA; its binding is stimulated by other ribosomal proteins, e.g. L4, L17, and L20. It is important during the early stages of 50S assembly. It makes multiple contacts with different domains of the 23S rRNA in the assembled 50S subunit and ribosome. Its function is as follows. The globular domain of the protein is located near the polypeptide exit tunnel on the outside of the subunit, while an extended beta-hairpin is found that lines the wall of the exit tunnel in the center of the 70S ribosome. This is Large ribosomal subunit protein uL22 from Nocardia farcinica (strain IFM 10152).